We begin with the raw amino-acid sequence, 136 residues long: MLQPKRFKFRKMHKGKNRGLSCDNKVNFGSYGLKSIERGRLTARQIEAARRTMSRSVKRQGKIWIRVFPDKPITQKPLEVRMGKGKGNVEYWVALIQPGKILYEIDGISEEECRFAFKLASSKLPIKTIFVSKLVL.

The protein belongs to the universal ribosomal protein uL16 family. Part of the 50S ribosomal subunit.

Its function is as follows. Binds 23S rRNA and is also seen to make contacts with the A and possibly P site tRNAs. In Buchnera aphidicola subsp. Cinara cedri (strain Cc), this protein is Large ribosomal subunit protein uL16.